The primary structure comprises 1031 residues: Beta-galactosidase (1031 aa).

Substrate contacts are provided by Asn98 and Asp197. Residue Asp197 coordinates Na(+). 3 residues coordinate Mg(2+): Glu412, His414, and Glu457. Substrate is bound by residues Glu457 and 533 to 536; that span reads EYAH. Catalysis depends on Glu457, which acts as the Proton donor. The active-site Nucleophile is Glu533. Position 593 (Asn593) interacts with Mg(2+). Residues Phe597 and Asp600 each contribute to the Na(+) site. Substrate is bound by residues Asp600 and Trp1005.

Belongs to the glycosyl hydrolase 2 family. Homotetramer. Requires Mg(2+) as cofactor. Na(+) serves as cofactor.

It catalyses the reaction Hydrolysis of terminal non-reducing beta-D-galactose residues in beta-D-galactosides.. The chain is Beta-galactosidase from Oenococcus oeni (strain ATCC BAA-331 / PSU-1).